A 348-amino-acid chain; its full sequence is Dihydroorotase (348 aa).

2 residues coordinate Zn(2+): His17 and His19. Residues 19 to 21 (HLR) and Asn45 each bind substrate. Zn(2+) is bound by residues Lys103, His140, and His178. An N6-carboxylysine modification is found at Lys103. His140 serves as a coordination point for substrate. Leu223 serves as a coordination point for substrate. Position 251 (Asp251) interacts with Zn(2+). Asp251 is a catalytic residue. Substrate is bound by residues His255 and Ala267.

The protein belongs to the metallo-dependent hydrolases superfamily. DHOase family. Class II DHOase subfamily. As to quaternary structure, homodimer. Zn(2+) serves as cofactor.

The enzyme catalyses (S)-dihydroorotate + H2O = N-carbamoyl-L-aspartate + H(+). It participates in pyrimidine metabolism; UMP biosynthesis via de novo pathway; (S)-dihydroorotate from bicarbonate: step 3/3. Its function is as follows. Catalyzes the reversible cyclization of carbamoyl aspartate to dihydroorotate. The polypeptide is Dihydroorotase (Shigella flexneri serotype 5b (strain 8401)).